Here is a 358-residue protein sequence, read N- to C-terminus: tRNA pseudouridine synthase B (358 aa).

Residues 1–50 (MTTPDAAIDSKISDSNGADKNKSAADDNAFNAPGRKRHHNNQPRRDKRDV) are disordered. D87 (nucleophile) is an active-site residue.

This sequence belongs to the pseudouridine synthase TruB family. Type 1 subfamily.

It catalyses the reaction uridine(55) in tRNA = pseudouridine(55) in tRNA. In terms of biological role, responsible for synthesis of pseudouridine from uracil-55 in the psi GC loop of transfer RNAs. The sequence is that of tRNA pseudouridine synthase B from Nitrobacter winogradskyi (strain ATCC 25391 / DSM 10237 / CIP 104748 / NCIMB 11846 / Nb-255).